We begin with the raw amino-acid sequence, 677 residues long: MAAHHRQNTAGRRKVQVSYVIRDEVEKYNRNGVNALQLDPALNRLFTAGRDSIIRIWSVNQHKQDPYIASMEHHTDWVNDIVLCCNGKTLISASSDTTVKVWNAHKGFCMSTLRTHKDYVKALAYAKDKELVASAGLDRQIFLWDVNTLTALTASNNTVTTSSLSGNKDSIYSLAMNQLGTIIVSGSTEKVLRVWDPRTCAKLMKLKGHTDNVKALLLNRDGTQCLSGSSDGTIRLWSLGQQRCIATYRVHDEGVWALQVNDAFTHVYSGGRDRKIYCTDLRNPDIRVLICEEKAPVLKMELDRSADPPPAIWVATTKSTVNKWTLKGIHNFRASGDYDNDCTNPITPLCTQPDQVIKGGASIIQCHILNDKRHLLTKDTNNNVAYWDVLKACKVEDLGKVDFEDEIKKRFKMVYVPNWFSVDLKTGMLTITLDESDCFAAWVSAKDAGFSSPDGSDPKLNLGGLLLQALLEYWPRTHVNPIDEEENEVNHVNGEQENRVQKGNGYFQVPPHTPVIFGEAGGRTLFRLLCRDSGGETESMLLNETVPQWVIDITVDKNMPKFNKIPFYLQPHASSGAKTLKKDRLSASDMLQVRKVMEHVYEKIINLDNESQTTSSSNNEKPGEQEKEEDIAVLAEEKIELLCQDQVLDPNMDLRTVKHFIWKSGGDLTLHYRQKST.

A Phosphotyrosine modification is found at Tyr-28. WD repeat units follow at residues 28–67, 73–112, 115–154, 166–205, 208–247, 250–289, 292–334, and 358–397; these read YNRNGVNALQLDPALNRLFTAGRDSIIRIWSVNQHKQDPY, HHTDWVNDIVLCCNGKTLISASSDTTVKVWNAHKGFCMST, THKDYVKALAYAKDKELVASAGLDRQIFLWDVNTLTALTA, GNKDSIYSLAMNQLGTIIVSGSTEKVLRVWDPRTCAKLMK, GHTDNVKALLLNRDGTQCLSGSSDGTIRLWSLGQQRCIAT, VHDEGVWALQVNDAFTHVYSGGRDRKIYCTDLRNPDIRVL, EEKA…NFRA, and KGGASIIQCHILNDKRHLLTKDTNNNVAYWDVLKACKVED. Lys-214 carries the N6-acetyllysine modification. An N6-acetyllysine modification is found at Lys-578. Residues 607 to 628 form a disordered region; sequence LDNESQTTSSSNNEKPGEQEKE. Residues 609 to 620 are compositionally biased toward low complexity; it reads NESQTTSSSNNE. The residue at position 613 (Thr-613) is a Phosphothreonine.

The protein belongs to the WD repeat WDR48 family. Interacts with USP46. Interacts with USP1. Interacts with USP12. Component of the USP12-WDR20-WDR48 deubiquitinating complex. Component of the USP12-DMWD-WDR48 deubiquitinating complex. Interacts with PHLPP1. Interacts with RAD51AP1; the interaction is direct and promotes formation of a trimeric complex with RAD51 via RAD51AP1. Interacts with ATAD5; the interaction regulates USP1-mediated PCNA deubiquitination. Interacts with RAD51; the interaction is enhanced under replication stress. Interacts with ITCH; the interaction is more efficient when both USP12 and WDR48/UAF1 are involved and may facilitate recruitment of the USP12 deubiquitinating complex to Notch.

It localises to the nucleus. Its subcellular location is the cytoplasm. The protein resides in the lysosome. It is found in the late endosome. Functionally, regulator of deubiquitinating complexes, which acts as a strong activator of USP1, USP12 and USP46. Enhances the USP1-mediated deubiquitination of FANCD2; USP1 being almost inactive by itself. Activates deubiquitination by increasing the catalytic turnover without increasing the affinity of deubiquitinating enzymes for the substrate. Also activates deubiquitinating activity of complexes containing USP12. Docks at the distal end of the USP12 fingers domain and induces a cascade of structural changes leading to the activation of the enzyme. Together with RAD51AP1, promotes DNA repair by stimulating RAD51-mediated homologous recombination. Binds single-stranded DNA (ssDNA) and double-stranded DNA (dsDNA). DNA-binding is required both for USP1-mediated deubiquitination of FANCD2 and stimulation of RAD51-mediated homologous recombination: both WDR48/UAF1 and RAD51AP1 have coordinated role in DNA-binding during these processes. Together with ATAD5 and by regulating USP1 activity, has a role in PCNA-mediated translesion synthesis (TLS) by deubiquitinating monoubiquitinated PCNA. Together with ATAD5, has a role in recruiting RAD51 to stalled forks during replication stress. The sequence is that of WD repeat-containing protein 48 (WDR48) from Bos taurus (Bovine).